The sequence spans 146 residues: Leptin (146 aa).

A disulfide bridge links Cys-96 with Cys-146.

The protein belongs to the leptin family.

Its subcellular location is the secreted. Functionally, key player in the regulation of energy balance and body weight control. Once released into the circulation, has central and peripheral effects by binding LEPR, found in many tissues, which results in the activation of several major signaling pathways. In the hypothalamus, acts as an appetite-regulating factor that induces a decrease in food intake and an increase in energy consumption by inducing anorexinogenic factors and suppressing orexigenic neuropeptides, also regulates bone mass and secretion of hypothalamo-pituitary-adrenal hormones. In the periphery, increases basal metabolism, influences reproductive function, regulates pancreatic beta-cell function and insulin secretion, is pro-angiogenic for endothelial cell and affects innate and adaptive immunity. In the arcuate nucleus of the hypothalamus, activates by depolarization POMC neurons inducing FOS and SOCS3 expression to release anorexigenic peptides and inhibits by hyperpolarization NPY neurons inducing SOCS3 with a consequent reduction on release of orexigenic peptides. In addition to its known satiety inducing effect, has a modulatory role in nutrient absorption. In the intestine, reduces glucose absorption by enterocytes by activating PKC and leading to a sequential activation of p38, PI3K and ERK signaling pathways which exerts an inhibitory effect on glucose absorption. Acts as a growth factor on certain tissues, through the activation of different signaling pathways increases expression of genes involved in cell cycle regulation such as CCND1, via JAK2-STAT3 pathway, or VEGFA, via MAPK1/3 and PI3K-AKT1 pathways. May also play an apoptotic role via JAK2-STAT3 pathway and up-regulation of BIRC5 expression. Pro-angiogenic, has mitogenic activity on vascular endothelial cells and plays a role in matrix remodeling by regulating the expression of matrix metalloproteinases (MMPs) and tissue inhibitors of metalloproteinases (TIMPs). In innate immunity, modulates the activity and function of neutrophils by increasing chemotaxis and the secretion of oxygen radicals. Increases phagocytosis by macrophages and enhances secretion of pro-inflammatory mediators. Increases cytotoxic ability of NK cells. Plays a pro-inflammatory role, in synergy with IL1B, by inducing NOS2 which promotes the production of IL6, IL8 and Prostaglandin E2, through a signaling pathway that involves JAK2, PI3K, MAP2K1/MEK1 and MAPK14/p38. In adaptive immunity, promotes the switch of memory T-cells towards T helper-1 cell immune responses. Increases CD4(+)CD25(-) T-cell proliferation and reduces autophagy during TCR (T-cell receptor) stimulation, through MTOR signaling pathway activation and BCL2 up-regulation. This Ovis aries (Sheep) protein is Leptin (LEP).